Here is a 114-residue protein sequence, read N- to C-terminus: MELNAFTILHIAVFIAVGYYANTHTTVTGSVEGKPNNPNEDIEVSYCRMNCTVENGVSSACSGDCVCVHRDNEPNGICVEITYFGDFGDPSQDPSIDEAAPRESVSKRRSNGES.

The signal sequence occupies residues 1–23 (MELNAFTILHIAVFIAVGYYANT). Cystine bridges form between C47/C65, C51/C67, and C61/C78. N50 carries N-linked (GlcNAc...) asparagine glycosylation. The disordered stretch occupies residues 89–114 (DPSQDPSIDEAAPRESVSKRRSNGES). Residues 99–114 (AAPRESVSKRRSNGES) show a composition bias toward basic and acidic residues.

It localises to the secreted. Functionally, salivary chemokine-binding protein which binds to host chemokine CXCL8. This is Evasin P1096 from Ixodes ricinus (Common tick).